A 539-amino-acid chain; its full sequence is Cytochrome c oxidase subunit 1 homolog, bacteroid (539 aa).

3 helical membrane passes run 4–24, 28–48, and 75–95; these read TVEM…AGLA, LFGA…LVLM, and GVVA…VVAL. Residue His-117 coordinates heme b. The next 8 helical transmembrane spans lie at 118–138, 154–174, 187–207, 214–234, 265–285, 298–318, 330–350, and 368–388; these read TSAV…FYVV, FVFW…LLGI, VDLW…GTIM, IYVA…LHVV, GHNA…YYFI, LSII…PHHL, LGMV…INGL, and MMVM…MMSI. Positions 266, 316, and 317 each coordinate Cu cation. Heme b-binding residues include His-404 and His-406. The next 4 helical transmembrane spans lie at 405 to 425, 443 to 463, 475 to 495, and 499 to 519; these read VHSG…YYLV, HFWL…VAGI, QGFL…YYVM, and GGAL…MTIL.

This sequence belongs to the heme-copper respiratory oxidase family. Requires Cu(2+) as cofactor. Heme b is required as a cofactor.

The protein resides in the cell membrane. The enzyme catalyses 4 Fe(II)-[cytochrome c] + O2 + 8 H(+)(in) = 4 Fe(III)-[cytochrome c] + 2 H2O + 4 H(+)(out). It participates in energy metabolism; oxidative phosphorylation. Cytochrome c oxidase is the component of the respiratory chain that catalyzes the reduction of oxygen to water. Subunits 1-3 form the functional core of the enzyme complex. Co I is the catalytic subunit of the enzyme. Electrons originating in cytochrome c or a quinol are transferred to the bimetallic center formed by a high-spin heme and copper B. This is Cytochrome c oxidase subunit 1 homolog, bacteroid (fixN) from Rhizobium meliloti (strain 1021) (Ensifer meliloti).